The primary structure comprises 406 residues: Probable delta-aminolevulinic acid dehydratase 2, chloroplastic (406 aa).

The N-terminal 34 residues, 1 to 34, are a transit peptide targeting the chloroplast; it reads MTSSMFRSPCKIPSVKGFEQKSYVGLKAASYNVR. Lys-275 serves as the catalytic Schiff-base intermediate with substrate. Positions 285 and 291 each coordinate 5-aminolevulinate. Residue Glu-307 participates in Mg(2+) binding. Residue Lys-322 is the Schiff-base intermediate with substrate of the active site. The 5-aminolevulinate site is built by Ser-348 and Tyr-387.

The protein belongs to the ALAD family. As to quaternary structure, homooctamer. Mg(2+) serves as cofactor.

The protein localises to the plastid. Its subcellular location is the chloroplast. The enzyme catalyses 2 5-aminolevulinate = porphobilinogen + 2 H2O + H(+). Its pathway is porphyrin-containing compound metabolism; protoporphyrin-IX biosynthesis; coproporphyrinogen-III from 5-aminolevulinate: step 1/4. It functions in the pathway porphyrin-containing compound metabolism; chlorophyll biosynthesis. In terms of biological role, catalyzes an early step in the biosynthesis of tetrapyrroles. Binds two molecules of 5-aminolevulinate per subunit, each at a distinct site, and catalyzes their condensation to form porphobilinogen. This chain is Probable delta-aminolevulinic acid dehydratase 2, chloroplastic (HEMB2), found in Arabidopsis thaliana (Mouse-ear cress).